A 337-amino-acid polypeptide reads, in one-letter code: MEDFSLDGNHGHVPVMRDRMAALIAENVEALGENAVIVDATLGAGGHAEFFLNTFPKARLIGLDRDQNALRDARARLAPFGERFIGVQTRFDGLREVLESVEGDIIDLAREHGIAGALFDLGVSSMQLDQVERGFAYRTDAPLDMRMDATQGITAADILNTYSHGDIARILKTYGDERFAGKIASAVLKEREKEPFTTSARLVELLYDAIPAATRRTGGHPAKRTFQALRVEVNNELDSLKNVLPQITDALNVGGRAVFMSYQSHEDKLVKKFFTDLTTSKTPPGLPVDLPGTAPQFKQVTRGAETASEAEIEENPRAAPVKVRAIERIANNSGDLS.

S-adenosyl-L-methionine is bound by residues 45–47, Asp-64, Phe-91, Asp-120, and Gln-127; that span reads GGH.

Belongs to the methyltransferase superfamily. RsmH family.

It localises to the cytoplasm. The catalysed reaction is cytidine(1402) in 16S rRNA + S-adenosyl-L-methionine = N(4)-methylcytidine(1402) in 16S rRNA + S-adenosyl-L-homocysteine + H(+). Its function is as follows. Specifically methylates the N4 position of cytidine in position 1402 (C1402) of 16S rRNA. The protein is Ribosomal RNA small subunit methyltransferase H of Corynebacterium glutamicum (strain R).